A 567-amino-acid chain; its full sequence is Laccase-7 (567 aa).

Residues methionine 1–alanine 23 form the signal peptide. Plastocyanin-like domains lie at asparagine 31–glycine 147 and lysine 157–alanine 310. N-linked (GlcNAc...) asparagine glycosylation is found at asparagine 34, asparagine 50, and asparagine 77. The Cu cation site is built by histidine 81 and histidine 83. A glycan (N-linked (GlcNAc...) asparagine) is linked at asparagine 115. Histidine 126 and histidine 128 together coordinate Cu cation. 7 N-linked (GlcNAc...) asparagine glycosylation sites follow: asparagine 186, asparagine 298, asparagine 339, asparagine 374, asparagine 386, asparagine 427, and asparagine 450. Positions aspartate 412–proline 551 constitute a Plastocyanin-like 3 domain. Residues histidine 468, histidine 471, histidine 473, histidine 530, cysteine 531, histidine 532, and histidine 536 each coordinate Cu cation.

This sequence belongs to the multicopper oxidase family. The cofactor is Cu cation. Predominantly expressed in tissues other than the inflorescence stem.

It is found in the secreted. The protein localises to the extracellular space. It localises to the apoplast. The catalysed reaction is 4 hydroquinone + O2 = 4 benzosemiquinone + 2 H2O. Lignin degradation and detoxification of lignin-derived products. This is Laccase-7 (LAC7) from Arabidopsis thaliana (Mouse-ear cress).